The primary structure comprises 164 residues: Transcription antitermination protein NusB (164 aa).

The protein belongs to the NusB family.

Its function is as follows. Involved in transcription antitermination. Required for transcription of ribosomal RNA (rRNA) genes. Binds specifically to the boxA antiterminator sequence of the ribosomal RNA (rrn) operons. In Chlorobaculum parvum (strain DSM 263 / NCIMB 8327) (Chlorobium vibrioforme subsp. thiosulfatophilum), this protein is Transcription antitermination protein NusB.